A 97-amino-acid chain; its full sequence is Ice-structuring protein (97 aa).

Positions 1–23 (MALSLFTVGQLIFLFWTLRITEA) are cleaved as a signal peptide. A propeptide spans 24–48 (NPDPAAKAAPAAVADPAAAAAAAVA) (removed by a dipeptidylpeptidase).

The protein belongs to the type-I AFP family. In terms of tissue distribution, detected in blood serum (at protein level).

The protein localises to the secreted. Its function is as follows. Contributes to protect fish blood from freezing at subzero sea water temperatures. Lowers the blood freezing point. Binds to nascent ice crystals and prevents further growth. This chain is Ice-structuring protein, found in Myzopsetta ferruginea (Yellowtail flounder).